Consider the following 250-residue polypeptide: Carboxymethylproline synthase (250 aa).

60–64 is a binding site for malonyl-CoA; it reads AGGDF.

This sequence belongs to the enoyl-CoA hydratase/isomerase family. As to quaternary structure, homotrimer.

The enzyme catalyses (S)-1-pyrroline-5-carboxylate + malonyl-CoA + H2O + H(+) = (2S,5S)-5-carboxymethylproline + CO2 + CoA. Its pathway is antibiotic biosynthesis; carbapenem biosynthesis. In terms of biological role, catalyzes the formation of (2S,5S)-carboxymethylproline (t-CMP) from malonyl-CoA and (S)-1-pyrroline-5-carboxylate, the first step in the biosynthesis of (5R)-carbapen-2-em-3-carboxylate, a beta-lactam antibiotic of the carbapenem class. Also catalyzes the independent decarboxylation of malonyl-CoA and methylmalonyl-CoA and the hydrolysis of CoA esters such as acetyl-CoA and propionyl-CoA. Catalyzes the reaction with a C2 epimeric mixture of methylmalonyl-CoA to give a 55:45 mixture of (6R)- and (6S)-epimers of 6-methyl-t-CMP, under standard incubation conditions. This Pectobacterium carotovorum subsp. carotovorum (Erwinia carotovora subsp. carotovora) protein is Carboxymethylproline synthase.